Consider the following 344-residue polypeptide: Methylthioribose-1-phosphate isomerase (344 aa).

Substrate-binding positions include 55–57 (RGA), Arg-98, and Gln-202. Asp-243 serves as the catalytic Proton donor. Substrate is bound at residue 253-254 (NK).

It belongs to the eIF-2B alpha/beta/delta subunits family. MtnA subfamily.

It carries out the reaction 5-(methylsulfanyl)-alpha-D-ribose 1-phosphate = 5-(methylsulfanyl)-D-ribulose 1-phosphate. It functions in the pathway amino-acid biosynthesis; L-methionine biosynthesis via salvage pathway; L-methionine from S-methyl-5-thio-alpha-D-ribose 1-phosphate: step 1/6. In terms of biological role, catalyzes the interconversion of methylthioribose-1-phosphate (MTR-1-P) into methylthioribulose-1-phosphate (MTRu-1-P). The polypeptide is Methylthioribose-1-phosphate isomerase (Gemmatimonas aurantiaca (strain DSM 14586 / JCM 11422 / NBRC 100505 / T-27)).